We begin with the raw amino-acid sequence, 602 residues long: Glutamine--fructose-6-phosphate aminotransferase [isomerizing] (602 aa).

Cys2 (nucleophile; for GATase activity) is an active-site residue. The Glutamine amidotransferase type-2 domain maps to 2–222; the sequence is CGIFGIIFAE…DGEYGYITAG (221 aa). SIS domains follow at residues 284–422 and 452–592; these read VANA…ALGH and LAKR…PDKP. Lys597 functions as the For Fru-6P isomerization activity in the catalytic mechanism.

As to quaternary structure, homodimer.

The protein resides in the cytoplasm. The catalysed reaction is D-fructose 6-phosphate + L-glutamine = D-glucosamine 6-phosphate + L-glutamate. Catalyzes the first step in hexosamine metabolism, converting fructose-6P into glucosamine-6P using glutamine as a nitrogen source. This chain is Glutamine--fructose-6-phosphate aminotransferase [isomerizing], found in Pyrobaculum aerophilum (strain ATCC 51768 / DSM 7523 / JCM 9630 / CIP 104966 / NBRC 100827 / IM2).